Consider the following 134-residue polypeptide: Ethylmalonyl-CoA/methylmalonyl-CoA epimerase (134 aa).

Positions 4 to 134 (RLNHVAIAVP…NGCLVELEQV (131 aa)) constitute a VOC domain. Positions 7, 79, and 130 each coordinate Co(2+). The active-site Proton donor/acceptor is the Glu130.

It belongs to the methylmalonyl-CoA epimerase family. Co(2+) serves as cofactor. The cofactor is Mn(2+).

The catalysed reaction is (2R)-ethylmalonyl-CoA = (2S)-ethylmalonyl-CoA. The enzyme catalyses (R)-methylmalonyl-CoA = (S)-methylmalonyl-CoA. In terms of biological role, promiscuous isomerase that catalyzes epimerization of both ethylmalonyl-CoA and methylmalonyl-CoA. Has thus a dual role in the ethylmalonyl-CoA pathway for acetyl-CoA assimilation required for R.sphaeroides growth on acetate as sole carbon source. The protein is Ethylmalonyl-CoA/methylmalonyl-CoA epimerase of Cereibacter sphaeroides (strain ATCC 17023 / DSM 158 / JCM 6121 / CCUG 31486 / LMG 2827 / NBRC 12203 / NCIMB 8253 / ATH 2.4.1.) (Rhodobacter sphaeroides).